Consider the following 216-residue polypeptide: Redox-sensing transcriptional repressor Rex 1 (216 aa).

A DNA-binding region (H-T-H motif) is located at residues 16 to 55 (LYYRYLRMLHDTGKNKVSSTELSEAVQVDSATIRRDFSYF). Residue 90–95 (GVGNLG) coordinates NAD(+).

The protein belongs to the transcriptional regulatory Rex family. As to quaternary structure, homodimer.

It is found in the cytoplasm. Its function is as follows. Modulates transcription in response to changes in cellular NADH/NAD(+) redox state. This Enterococcus faecalis (strain ATCC 700802 / V583) protein is Redox-sensing transcriptional repressor Rex 1.